The following is a 263-amino-acid chain: Ribonuclease HII (263 aa).

Residues 71–262 (QAIAGIDEVG…VKSMCCNSTN (192 aa)) form the RNase H type-2 domain. D77, E78, and D172 together coordinate a divalent metal cation.

Belongs to the RNase HII family. It depends on Mn(2+) as a cofactor. Mg(2+) is required as a cofactor.

It is found in the cytoplasm. The enzyme catalyses Endonucleolytic cleavage to 5'-phosphomonoester.. Endonuclease that specifically degrades the RNA of RNA-DNA hybrids. The sequence is that of Ribonuclease HII from Streptococcus pyogenes serotype M2 (strain MGAS10270).